Here is a 197-residue protein sequence, read N- to C-terminus: RNA chaperone ProQ (197 aa).

The segment at 115–138 (RAAAKKAQQKKHPRKPANKNLKKE) is disordered. Positions 117-131 (AAKKAQQKKHPRKPA) are enriched in basic residues.

The protein belongs to the ProQ family.

It localises to the cytoplasm. Functionally, RNA chaperone with significant RNA binding, RNA strand exchange and RNA duplexing activities. This chain is RNA chaperone ProQ, found in Haemophilus influenzae (strain ATCC 51907 / DSM 11121 / KW20 / Rd).